The sequence spans 442 residues: tRNA modification GTPase MnmE (442 aa).

(6S)-5-formyl-5,6,7,8-tetrahydrofolate is bound by residues Arg21, Glu79, and Lys118. The TrmE-type G domain maps to 215 to 365; the sequence is GLKIAIVGKP…LENKLSSYCN (151 aa). GTP contacts are provided by residues 225-230, 244-250, and 269-272; these read NVGKSS, TNEAGTT, and DTAG. The Mg(2+) site is built by Ser229 and Thr250. (6S)-5-formyl-5,6,7,8-tetrahydrofolate is bound at residue Lys442.

The protein belongs to the TRAFAC class TrmE-Era-EngA-EngB-Septin-like GTPase superfamily. TrmE GTPase family. Homodimer. Heterotetramer of two MnmE and two MnmG subunits. K(+) is required as a cofactor.

It is found in the cytoplasm. Its function is as follows. Exhibits a very high intrinsic GTPase hydrolysis rate. Involved in the addition of a carboxymethylaminomethyl (cmnm) group at the wobble position (U34) of certain tRNAs, forming tRNA-cmnm(5)s(2)U34. This Mycoplasma mobile (strain ATCC 43663 / 163K / NCTC 11711) (Mesomycoplasma mobile) protein is tRNA modification GTPase MnmE.